The primary structure comprises 406 residues: Glutamyl-tRNA reductase (406 aa).

Residues 51–54, S101, 106–108, and Q112 contribute to the substrate site; these read TCNR and ESE. C52 serves as the catalytic Nucleophile. Residue 180–185 coordinates NADP(+); the sequence is GAGSIG.

Belongs to the glutamyl-tRNA reductase family. In terms of assembly, homodimer.

It catalyses the reaction (S)-4-amino-5-oxopentanoate + tRNA(Glu) + NADP(+) = L-glutamyl-tRNA(Glu) + NADPH + H(+). The protein operates within porphyrin-containing compound metabolism; protoporphyrin-IX biosynthesis; 5-aminolevulinate from L-glutamyl-tRNA(Glu): step 1/2. Catalyzes the NADPH-dependent reduction of glutamyl-tRNA(Glu) to glutamate 1-semialdehyde (GSA). This is Glutamyl-tRNA reductase from Caldivirga maquilingensis (strain ATCC 700844 / DSM 13496 / JCM 10307 / IC-167).